The sequence spans 1020 residues: Phosphatidylinositol 3-kinase VPS34 (1020 aa).

Positions Leu-49–Lys-210 constitute a C2 PI3K-type domain. The 247-residue stretch at Asp-331–Ile-577 folds into the PIK helical domain. A PI3K/PI4K catalytic domain is found at Tyr-666 to Leu-1004. Residues Val-672–Ala-678 are G-loop. The tract at residues Gly-873–Asn-881 is catalytic loop. The tract at residues His-892–Pro-913 is activation loop.

Belongs to the PI3/PI4-kinase family. Component of the autophagy-specific VPS34 PI3-kinase complex I composed of at least VPS15, VPS30, VPS34, and of the VPS34 PI3-kinase complex II composed of VPS15, VPS30, VPS34 and VPS38. Interacts with VMNA7. Autophosphorylated.

It is found in the golgi apparatus. It localises to the trans-Golgi network membrane. The protein localises to the endosome membrane. The enzyme catalyses a 1,2-diacyl-sn-glycero-3-phospho-(1D-myo-inositol) + ATP = a 1,2-diacyl-sn-glycero-3-phospho-(1D-myo-inositol-3-phosphate) + ADP + H(+). In terms of biological role, multifunctional phosphatidylinositol 3-kinase involved in acidification of vacuoles, pH-dependent cell growth, and autophagocytosis. Plays an important role in protein transport and virulence. Component of the autophagy-specific VPS34 PI3-kinase complex I essential to recruit the ATG8-phosphatidylinositol conjugate and the ATG12-ATG5 conjugate to the pre-autophagosomal structure. Also involved in endosome-to-Golgi retrograde transport as part of the VPS34 PI3-kinase complex II. This second complex is required for the endosome-to-Golgi retrieval of PEP1 and KEX2, and the recruitment of VPS5 and VPS7, two components of the retromer complex, to endosomal membranes (probably through the synthesis of a specific pool of phosphatidylinositol 3-phosphate recruiting the retromer to the endosomes). Finally, it might also be involved in ethanol tolerance and cell wall integrity. This Candida albicans (Yeast) protein is Phosphatidylinositol 3-kinase VPS34.